The primary structure comprises 370 residues: Phosphoserine aminotransferase (370 aa).

L-glutamate is bound at residue R38. The pyridoxal 5'-phosphate site is built by W101, T143, D166, and Q189. K190 is modified (N6-(pyridoxal phosphate)lysine). Pyridoxal 5'-phosphate is bound at residue 243–244; sequence NT.

This sequence belongs to the class-V pyridoxal-phosphate-dependent aminotransferase family. SerC subfamily. Homodimer. Requires pyridoxal 5'-phosphate as cofactor.

Its subcellular location is the cytoplasm. The enzyme catalyses O-phospho-L-serine + 2-oxoglutarate = 3-phosphooxypyruvate + L-glutamate. The catalysed reaction is 4-(phosphooxy)-L-threonine + 2-oxoglutarate = (R)-3-hydroxy-2-oxo-4-phosphooxybutanoate + L-glutamate. Its pathway is amino-acid biosynthesis; L-serine biosynthesis; L-serine from 3-phospho-D-glycerate: step 2/3. It functions in the pathway cofactor biosynthesis; pyridoxine 5'-phosphate biosynthesis; pyridoxine 5'-phosphate from D-erythrose 4-phosphate: step 3/5. Functionally, catalyzes the reversible conversion of 3-phosphohydroxypyruvate to phosphoserine and of 3-hydroxy-2-oxo-4-phosphonooxybutanoate to phosphohydroxythreonine. The polypeptide is Phosphoserine aminotransferase (Methanosarcina mazei (strain ATCC BAA-159 / DSM 3647 / Goe1 / Go1 / JCM 11833 / OCM 88) (Methanosarcina frisia)).